An 839-amino-acid chain; its full sequence is Toll-like receptor 4 (839 aa).

Positions 1–23 (MMSASRLAGTLIPAMAFLSCVRP) are cleaved as a signal peptide. At 24-631 (ESWEPCVEVV…SLNITCQMNK (608 aa)) the chain is on the extracellular side. A disulfide bridge links cysteine 29 with cysteine 40. The N-linked (GlcNAc...) asparagine glycan is linked to asparagine 35. LRR repeat units follow at residues 55 to 76 (STKN…SFFS), 79 to 100 (ELQV…AYQS), 103 to 124 (HLST…AFSG), 127 to 148 (SLQK…PIGH), and 151 to 172 (TLKE…EYFS). N-linked (GlcNAc...) asparagine glycosylation occurs at asparagine 173. LRR repeat units lie at residues 176-199 (NLEH…RVLH), 205-225 (NLSL…AFKE), and 227-247 (RLHK…KTCI). N-linked (GlcNAc...) asparagine glycosylation occurs at asparagine 205. The cysteines at positions 281 and 306 are disulfide-linked. N-linked (GlcNAc...) asparagine glycosylation is found at asparagine 282 and asparagine 309. LRR repeat units follow at residues 331–351 (GWQH…LKLK), 352–373 (SLKR…VDLP), 374–394 (SLEF…CSQS), 400–422 (SLKY…LGLE), 423–444 (QLEH…SVFL), 448–456 (NLIYLDISH), 472–495 (SLEV…FTEL), 497–518 (NLTF…AFNS), 521–542 (SLQV…PYKC), and 545–565 (SLQV…QELQ). The cysteines at positions 390 and 391 are disulfide-linked. Residues asparagine 497 and asparagine 526 are each glycosylated (N-linked (GlcNAc...) asparagine). N-linked (GlcNAc...) asparagine glycosylation occurs at asparagine 575. Positions 579 to 629 (NDFACTCEHQSFLQWIKDQRQLLVEVERMECATPSDKQGMPVLSLNITCQM) constitute an LRRCT domain. Intrachain disulfides connect cysteine 583–cysteine 609 and cysteine 585–cysteine 627. Residues asparagine 624 and asparagine 630 are each glycosylated (N-linked (GlcNAc...) asparagine). The helical transmembrane segment at 632 to 652 (TIIGVSVLSVLVVSVVAVLVY) threads the bilayer. Residues 653-839 (KFYFHLMLLA…GCNWQEATSI (187 aa)) are Cytoplasmic-facing. The TIR domain occupies 672-815 (NIYDAFVIYS…IFWRRLRKAL (144 aa)).

The protein belongs to the Toll-like receptor family. As to quaternary structure, belongs to the lipopolysaccharide (LPS) receptor, a multi-protein complex containing at least CD14, LY96 and TLR4. Binding to bacterial LPS leads to homodimerization. Interacts with LY96 via the extracellular domain. Interacts with MYD88 and TIRAP via their respective TIR domains. Interacts with NOX4. Interacts with CNPY3 and HSP90B1; this interaction is required for proper folding in the endoplasmic reticulum. Interacts with MAP3K21; this interaction leads to negative regulation of TLR4 signaling. Interacts with CD36, following CD36 stimulation by oxLDL or amyloid-beta 42, and forms a heterodimer with TLR6. The trimeric complex is internalized and triggers inflammatory response. LYN kinase activity facilitates TLR4-TLR6 heterodimerization and signal initiation. Interacts with TICAM1 in response to LPS in a WDFY1-dependent manner. Interacts with WDFY1 in response to LPS. Interacts with SMPDL3B. Interacts with CEACAM1; upon lipopolysaccharide stimulation, forms a complex including TLR4 and the phosphorylated form of SYK and CEACAM1, which in turn, recruits PTPN6 that dephosphorylates SYK, reducing the production of reactive oxygen species (ROS) and lysosome disruption, which in turn, reduces the activity of the inflammasome. Interacts with RFTN1; the interaction occurs in response to lipopolysaccharide stimulation. Interacts with SCIMP; the interaction occurs in response to lipopolysaccharide stimulation and is enhanced by phosphorylation of SCIMP by LYN. This interaction facilitates the phosphorylation of TLR4 by LYN which elicits a selective cytokine response in macrophages. Interacts with TRAF3IP3. Interacts with TREM1; this interaction enhances TLR4-mediated inflammatory response. Interacts with ZG16B/PAUF. Interacts with CD82; this interaction inhibits TLR4-mediated signaling pathway. In terms of processing, phosphorylated on tyrosine residues by LYN after binding lipopolysaccharide. Ubiquitinated by RNF128 via 'Lys-28'-linked polyubiquitin chains, leading to proteasomal degradation.

The protein resides in the cell membrane. The protein localises to the early endosome. It localises to the cell projection. It is found in the ruffle. Functionally, transmembrane receptor that functions as a pattern recognition receptor recognizing pathogen- and damage-associated molecular patterns (PAMPs and DAMPs) to induce innate immune responses via downstream signaling pathways. At the plasma membrane, cooperates with LY96 to mediate the innate immune response to bacterial lipopolysaccharide (LPS). Also involved in LPS-independent inflammatory responses triggered by free fatty acids, such as palmitate, and Ni(2+). Mechanistically, acts via MYD88, TIRAP and TRAF6, leading to NF-kappa-B activation, cytokine secretion and the inflammatory response. Alternatively, CD14-mediated TLR4 internalization via endocytosis is associated with the initiation of a MYD88-independent signaling via the TICAM1-TBK1-IRF3 axis leading to type I interferon production. In addition to the secretion of proinflammatory cytokines, initiates the activation of NLRP3 inflammasome and formation of a positive feedback loop between autophagy and NF-kappa-B signaling cascade. In complex with TLR6, promotes inflammation in monocytes/macrophages by associating with TLR6 and the receptor CD86. Upon ligand binding, such as oxLDL or amyloid-beta 42, the TLR4:TLR6 complex is internalized and triggers inflammatory response, leading to NF-kappa-B-dependent production of CXCL1, CXCL2 and CCL9 cytokines, via MYD88 signaling pathway, and CCL5 cytokine, via TICAM1 signaling pathway. In myeloid dendritic cells, vesicular stomatitis virus glycoprotein G but not LPS promotes the activation of IRF7, leading to type I IFN production in a CD14-dependent manner. In Pan paniscus (Pygmy chimpanzee), this protein is Toll-like receptor 4 (TLR4).